The primary structure comprises 330 residues: G-protein coupled bile acid receptor 1 (330 aa).

The Extracellular portion of the chain corresponds to 1–19; the sequence is MTPNSTGEVPSPIPKGALG. N-linked (GlcNAc...) asparagine glycosylation is present at asparagine 4. Residues 20–40 traverse the membrane as a helical segment; sequence LSLALASLIITANLLLALGIA. At 41 to 50 the chain is on the cytoplasmic side; the sequence is WDRRLRSPPA. The chain crosses the membrane as a helical span at residues 51-71; sequence GCFFLSLLLAGLLTGLALPTL. At 72–85 the chain is on the extracellular side; the sequence is PGLWNQSRRGYWSC. An N-linked (GlcNAc...) asparagine glycan is attached at asparagine 76. A disulfide bridge connects residues cysteine 85 and cysteine 155. Residues 86-106 traverse the membrane as a helical segment; that stretch reads LLVYLAPNFSFLSLLANLLLV. The Cytoplasmic portion of the chain corresponds to 107 to 125; that stretch reads HGERYMAVLRPLQPPGSIR. The chain crosses the membrane as a helical span at residues 126–146; it reads LALLLTWAGPLLFASLPALGW. Topologically, residues 147–165 are extracellular; that stretch reads NHWTPGANCSSQAIFPAPY. Residues 166-186 form a helical membrane-spanning segment; sequence LYLEVYGLLLPAVGAAAFLSV. Over 187-228 the chain is Cytoplasmic; the sequence is RVLATAHRQLQDICRLERAVCRDEPSALARALTWRQARAQAG. A helical transmembrane segment spans residues 229–249; it reads AMLLFGLCWGPYVATLLLSVL. Over 250-261 the chain is Extracellular; the sequence is AYEQRPPLGPGT. The helical transmembrane segment at 262–282 threads the bilayer; that stretch reads LLSLLSLGSASAAAVPVAMGL. Topologically, residues 283–330 are cytoplasmic; the sequence is GDQRYTAPWRAAAQRCLQGLWGRASRDSPGPSIAYHPSSQSSVDLDLN. The segment at 309–330 is disordered; that stretch reads DSPGPSIAYHPSSQSSVDLDLN. A compositionally biased stretch (polar residues) spans 319 to 330; it reads PSSQSSVDLDLN.

Belongs to the G-protein coupled receptor 1 family. Ubiquitously expressed. Expressed at higher level in spleen and placenta. Expressed at lower level in other tissues. In digestive tissues, it is expressed in stomach, duodenum, ileocecum, ileum, jejunum, ascending colon, transverse colon, descending colon, cecum and liver, but not in esophagus and rectum.

It is found in the cell membrane. Its function is as follows. Receptor for bile acid. Bile acid-binding induces its internalization, activation of extracellular signal-regulated kinase and intracellular cAMP production. May be involved in the suppression of macrophage functions by bile acids. This is G-protein coupled bile acid receptor 1 (GPBAR1) from Homo sapiens (Human).